The chain runs to 244 residues: MNPEEFKQALAQHEIALTAKQLAQFALYFQLLVTTNKQFNLTTITAEPEVYLKHFYDSLTPAFYVPALRDQPLTICDVGAGAGFPSIPLKIAFPQLQVTIVDSLNKRINFLNDLVQQLGLTGVKTFHDRAETFAGKKSAHRESYDIATARAVARLSVLSELCLPLVKIGGQMIALKAANASTETAEGTYAVQQLGGQIVQDEAFSLPVTADPRHIIVIDKKKPSPKRYPRKPGTPAKQPLTAPM.

S-adenosyl-L-methionine contacts are provided by residues G79, F84, 130–131 (AE), and R150. Residues 221 to 244 (KKPSPKRYPRKPGTPAKQPLTAPM) are disordered.

This sequence belongs to the methyltransferase superfamily. RNA methyltransferase RsmG family.

It is found in the cytoplasm. In terms of biological role, specifically methylates the N7 position of a guanine in 16S rRNA. This is Ribosomal RNA small subunit methyltransferase G from Lactiplantibacillus plantarum (strain ATCC BAA-793 / NCIMB 8826 / WCFS1) (Lactobacillus plantarum).